The chain runs to 353 residues: MYGALRKALFLVPPERIHGLVFAGLRAATTPVPLRRSLSRRLAPHDPVLASTVFGVRFPGPLGLAAGFDKDGLGVHTWGALGFGYAELGTVTAQAQPGNPPPRMFRLPADRALLNRMGFNNHGSAALALQLARSSSDVPIGVNIGKTKVTEPQDAPADYAESARLLGSLAAYLVVNVSSPNTPGLRDLQSVESLRPILSAVLAETSTPVLVKIAPDLADTDIDDIADLAVELGLAGIVATNTTISRDGLKTPGAADLGAGGISGPPVARRALEVLRRLYARVGDKLVLISVGGIETSDDAWERITAGASLLQGYTGFVYGGGLWARSINDGVAARLRENGFGTLAEAVGSAAR.

Residues 66–70 (AGFDK) and threonine 90 contribute to the FMN site. Lysine 70 lines the substrate pocket. Residue 115–119 (NRMGF) coordinates substrate. Residues asparagine 143 and asparagine 176 each coordinate FMN. Asparagine 176 is a binding site for substrate. Serine 179 acts as the Nucleophile in catalysis. Residue asparagine 181 coordinates substrate. Residues lysine 212 and threonine 240 each coordinate FMN. Position 241–242 (241–242 (NT)) interacts with substrate. Residues glycine 264, glycine 293, and 314–315 (YT) each bind FMN.

Belongs to the dihydroorotate dehydrogenase family. Type 2 subfamily. In terms of assembly, monomer. FMN is required as a cofactor.

Its subcellular location is the cell membrane. It catalyses the reaction (S)-dihydroorotate + a quinone = orotate + a quinol. Its pathway is pyrimidine metabolism; UMP biosynthesis via de novo pathway; orotate from (S)-dihydroorotate (quinone route): step 1/1. Catalyzes the conversion of dihydroorotate to orotate with quinone as electron acceptor. This chain is Dihydroorotate dehydrogenase (quinone), found in Mycolicibacterium gilvum (strain PYR-GCK) (Mycobacterium gilvum (strain PYR-GCK)).